The following is a 425-amino-acid chain: Serine hydroxymethyltransferase (425 aa).

(6S)-5,6,7,8-tetrahydrofolate contacts are provided by residues leucine 123 and 127-129; that span reads GHL. Lysine 232 is subject to N6-(pyridoxal phosphate)lysine. Residue glutamate 248 coordinates (6S)-5,6,7,8-tetrahydrofolate.

This sequence belongs to the SHMT family. As to quaternary structure, homodimer. Pyridoxal 5'-phosphate serves as cofactor.

The protein localises to the cytoplasm. The catalysed reaction is (6R)-5,10-methylene-5,6,7,8-tetrahydrofolate + glycine + H2O = (6S)-5,6,7,8-tetrahydrofolate + L-serine. It functions in the pathway one-carbon metabolism; tetrahydrofolate interconversion. It participates in amino-acid biosynthesis; glycine biosynthesis; glycine from L-serine: step 1/1. Functionally, catalyzes the reversible interconversion of serine and glycine with tetrahydrofolate (THF) serving as the one-carbon carrier. This reaction serves as the major source of one-carbon groups required for the biosynthesis of purines, thymidylate, methionine, and other important biomolecules. Also exhibits THF-independent aldolase activity toward beta-hydroxyamino acids, producing glycine and aldehydes, via a retro-aldol mechanism. The sequence is that of Serine hydroxymethyltransferase from Anaplasma phagocytophilum (strain HZ).